The primary structure comprises 129 residues: NADH-quinone oxidoreductase subunit K 2 (129 aa).

The next 3 helical transmembrane spans lie at 3–23 (LAYPAVLSALLFSTGLYGVLA), 28–48 (ILVLMSVELMLNAVNLNLVAF), and 68–88 (LFTIAIAAAEIGIGLAIVLAV). The segment at 98-129 (DKLRDTAEGPEPDGPGTDGSAPTAAEKAEATA) is disordered. Over residues 111-122 (GPGTDGSAPTAA) the composition is skewed to low complexity.

Belongs to the complex I subunit 4L family. In terms of assembly, NDH-1 is composed of 14 different subunits. Subunits NuoA, H, J, K, L, M, N constitute the membrane sector of the complex.

Its subcellular location is the cell membrane. It catalyses the reaction a quinone + NADH + 5 H(+)(in) = a quinol + NAD(+) + 4 H(+)(out). Functionally, NDH-1 shuttles electrons from NADH, via FMN and iron-sulfur (Fe-S) centers, to quinones in the respiratory chain. The immediate electron acceptor for the enzyme in this species is believed to be a menaquinone. Couples the redox reaction to proton translocation (for every two electrons transferred, four hydrogen ions are translocated across the cytoplasmic membrane), and thus conserves the redox energy in a proton gradient. In Streptomyces avermitilis (strain ATCC 31267 / DSM 46492 / JCM 5070 / NBRC 14893 / NCIMB 12804 / NRRL 8165 / MA-4680), this protein is NADH-quinone oxidoreductase subunit K 2.